Here is a 130-residue protein sequence, read N- to C-terminus: Small ribosomal subunit protein uS11 (130 aa).

Belongs to the universal ribosomal protein uS11 family. As to quaternary structure, part of the 30S ribosomal subunit. Interacts with proteins S7 and S18. Binds to IF-3.

In terms of biological role, located on the platform of the 30S subunit, it bridges several disparate RNA helices of the 16S rRNA. Forms part of the Shine-Dalgarno cleft in the 70S ribosome. This chain is Small ribosomal subunit protein uS11, found in Prochlorococcus marinus subsp. pastoris (strain CCMP1986 / NIES-2087 / MED4).